Here is a 106-residue protein sequence, read N- to C-terminus: Large ribosomal subunit protein uL23 (106 aa).

The protein belongs to the universal ribosomal protein uL23 family. Part of the 50S ribosomal subunit. Contacts protein L29, and trigger factor when it is bound to the ribosome.

Its function is as follows. One of the early assembly proteins it binds 23S rRNA. One of the proteins that surrounds the polypeptide exit tunnel on the outside of the ribosome. Forms the main docking site for trigger factor binding to the ribosome. The polypeptide is Large ribosomal subunit protein uL23 (Acinetobacter baumannii (strain SDF)).